The sequence spans 475 residues: Ribulose bisphosphate carboxylase large chain (475 aa).

The propeptide occupies 1 to 2 (MS). An N-acetylproline modification is found at P3. The substrate site is built by N123 and T173. The active-site Proton acceptor is K175. K177 contacts substrate. 3 residues coordinate Mg(2+): K201, D203, and E204. The residue at position 201 (K201) is an N6-carboxylysine. H294 acts as the Proton acceptor in catalysis. Substrate-binding residues include R295, H327, and S379.

Belongs to the RuBisCO large chain family. Type I subfamily. As to quaternary structure, heterohexadecamer of 8 large chains and 8 small chains; disulfide-linked. The disulfide link is formed within the large subunit homodimers. It depends on Mg(2+) as a cofactor. Post-translationally, the disulfide bond which can form in the large chain dimeric partners within the hexadecamer appears to be associated with oxidative stress and protein turnover.

It localises to the plastid. The protein resides in the chloroplast. The enzyme catalyses 2 (2R)-3-phosphoglycerate + 2 H(+) = D-ribulose 1,5-bisphosphate + CO2 + H2O. The catalysed reaction is D-ribulose 1,5-bisphosphate + O2 = 2-phosphoglycolate + (2R)-3-phosphoglycerate + 2 H(+). RuBisCO catalyzes two reactions: the carboxylation of D-ribulose 1,5-bisphosphate, the primary event in carbon dioxide fixation, as well as the oxidative fragmentation of the pentose substrate in the photorespiration process. Both reactions occur simultaneously and in competition at the same active site. The chain is Ribulose bisphosphate carboxylase large chain from Gnetum parvifolium (Small-leaved jointfir).